We begin with the raw amino-acid sequence, 120 residues long: UPF0344 protein BCAH187_A1308 (120 aa).

The next 4 membrane-spanning stretches (helical) occupy residues 6–26 (ITAW…YSAG), 32–52 (VHMG…WLYL), 64–84 (WYGL…MVLV), and 91–111 (ATGA…YLGL).

Belongs to the UPF0344 family.

Its subcellular location is the cell membrane. This chain is UPF0344 protein BCAH187_A1308, found in Bacillus cereus (strain AH187).